The sequence spans 434 residues: MEKIIVRGGKRLNGTVRVEGAKNAVLPIIAAALLASDGKNVLSEVPVLSDVYTINEVLRHLNAEVVFENNQVTIDSSKELNIEAPFEYVRKMRASVQVMGPLLARNGRARIALPGGCAIGSRPIDQHLKGFEAMGAKVQVGNGFVEAYVEGELKGAKIYLDFPSVGATENIMSAATLAKGTTILENAAKEPEIVDLANFLNAMGAKVRGAGTGTIRIEGVDKLYGANHSIIPDRIEAGTFMVAAAITGGDILIENAVPEHLRSITAKMEEMGVKIIEENEGVRVIGPDKLKAVDIKTMPHPGFPTDMQSQMMALLLQADGTSMITETVFENRFMHVEEFRRMNADIKIEGRSVIMNGPNSLQGAEVAATDLRAAAALILAGLVSEGYTRVTELKHLDRGYVNFHKKLAALGATIERVNEKVEEVKEQEVSDLHA.

22–23 provides a ligand contact to phosphoenolpyruvate; sequence KN. A UDP-N-acetyl-alpha-D-glucosamine-binding site is contributed by arginine 93. Cysteine 117 serves as the catalytic Proton donor. Cysteine 117 is modified (2-(S-cysteinyl)pyruvic acid O-phosphothioketal). Residues 122 to 126, aspartate 306, and valine 328 each bind UDP-N-acetyl-alpha-D-glucosamine; that span reads RPIDQ.

This sequence belongs to the EPSP synthase family. MurA subfamily.

The protein resides in the cytoplasm. It carries out the reaction phosphoenolpyruvate + UDP-N-acetyl-alpha-D-glucosamine = UDP-N-acetyl-3-O-(1-carboxyvinyl)-alpha-D-glucosamine + phosphate. It participates in cell wall biogenesis; peptidoglycan biosynthesis. Its function is as follows. Cell wall formation. Adds enolpyruvyl to UDP-N-acetylglucosamine. This is UDP-N-acetylglucosamine 1-carboxyvinyltransferase 1 from Bacillus cereus (strain ATCC 14579 / DSM 31 / CCUG 7414 / JCM 2152 / NBRC 15305 / NCIMB 9373 / NCTC 2599 / NRRL B-3711).